A 371-amino-acid polypeptide reads, in one-letter code: Cytochrome b (371 aa).

4 helical membrane passes run 25-45, 69-90, 105-125, and 170-190; these read FGSM…FLAV, WIMQ…YIHI, WLSG…GYVL, and FFAL…IHII. Heme b-binding residues include H75 and H89. 2 residues coordinate heme b: H174 and H188. A ubiquinone is bound at residue H193. 4 helical membrane-spanning segments follow: residues 218 to 238, 280 to 300, 312 to 332, and 339 to 358; these read YKDM…LSFM, LGGT…PFTH, LTQA…WTAT, and FTLI…IINP.

It belongs to the cytochrome b family. The cytochrome bc1 complex contains 3 respiratory subunits (MT-CYB, CYC1 and UQCRFS1), 2 core proteins (UQCRC1 and UQCRC2) and probably 6 low-molecular weight proteins. Heme b serves as cofactor.

The protein localises to the mitochondrion inner membrane. Its function is as follows. Component of the ubiquinol-cytochrome c reductase complex (complex III or cytochrome b-c1 complex) that is part of the mitochondrial respiratory chain. The b-c1 complex mediates electron transfer from ubiquinol to cytochrome c. Contributes to the generation of a proton gradient across the mitochondrial membrane that is then used for ATP synthesis. This chain is Cytochrome b (MT-CYB), found in Toxicocalamus preussi (Preuss's forest snake).